Here is a 453-residue protein sequence, read N- to C-terminus: Transcription factor bHLH110 (453 aa).

2 disordered regions span residues Met-1–Ser-37 and Ser-177–Phe-197. 2 stretches are compositionally biased toward low complexity: residues Gln-8–Ser-32 and Ser-177–Ser-192. The region spanning Val-322–Leu-371 is the bHLH domain. The segment at Ser-386–Leu-411 is disordered.

In terms of assembly, homodimer.

It localises to the nucleus. This is Transcription factor bHLH110 (BHLH110) from Arabidopsis thaliana (Mouse-ear cress).